A 191-amino-acid chain; its full sequence is dCTP deaminase (191 aa).

DCTP contacts are provided by residues 112–117 (KSTYAR), 136–138 (TLE), Gln-157, Tyr-173, and Gln-183. Glu-138 functions as the Proton donor/acceptor in the catalytic mechanism.

This sequence belongs to the dCTP deaminase family. As to quaternary structure, homotrimer.

The enzyme catalyses dCTP + H2O + H(+) = dUTP + NH4(+). The protein operates within pyrimidine metabolism; dUMP biosynthesis; dUMP from dCTP (dUTP route): step 1/2. Catalyzes the deamination of dCTP to dUTP. This is dCTP deaminase from Psychrobacter arcticus (strain DSM 17307 / VKM B-2377 / 273-4).